A 125-amino-acid polypeptide reads, in one-letter code: S-adenosylmethionine decarboxylase proenzyme (125 aa).

Catalysis depends on Ser-71, which acts as the Schiff-base intermediate with substrate; via pyruvic acid. A Pyruvic acid (Ser); by autocatalysis modification is found at Ser-71. The Proton acceptor; for processing activity role is filled by His-76. Cys-91 acts as the Proton donor; for catalytic activity in catalysis.

This sequence belongs to the prokaryotic AdoMetDC family. Type 1 subfamily. As to quaternary structure, heterotetramer of two alpha and two beta chains arranged as a dimer of alpha/beta heterodimers. The cofactor is pyruvate. Post-translationally, is synthesized initially as an inactive proenzyme. Formation of the active enzyme involves a self-maturation process in which the active site pyruvoyl group is generated from an internal serine residue via an autocatalytic post-translational modification. Two non-identical subunits are generated from the proenzyme in this reaction, and the pyruvate is formed at the N-terminus of the alpha chain, which is derived from the carboxyl end of the proenzyme. The post-translation cleavage follows an unusual pathway, termed non-hydrolytic serinolysis, in which the side chain hydroxyl group of the serine supplies its oxygen atom to form the C-terminus of the beta chain, while the remainder of the serine residue undergoes an oxidative deamination to produce ammonia and the pyruvoyl group blocking the N-terminus of the alpha chain.

It catalyses the reaction S-adenosyl-L-methionine + H(+) = S-adenosyl 3-(methylsulfanyl)propylamine + CO2. It functions in the pathway amine and polyamine biosynthesis; S-adenosylmethioninamine biosynthesis; S-adenosylmethioninamine from S-adenosyl-L-methionine: step 1/1. Its function is as follows. Catalyzes the decarboxylation of S-adenosylmethionine to S-adenosylmethioninamine (dcAdoMet), the propylamine donor required for the synthesis of the polyamines spermine and spermidine from the diamine putrescine. The protein is S-adenosylmethionine decarboxylase proenzyme of Pyrobaculum aerophilum (strain ATCC 51768 / DSM 7523 / JCM 9630 / CIP 104966 / NBRC 100827 / IM2).